The chain runs to 258 residues: uncharacterized protein (258 aa).

The chain crosses the membrane as a helical span at residues 163–187 (GIVGAAGLMLMFADLNGIPGICLMG).

It is found in the membrane. This is an uncharacterized protein from Methanocaldococcus jannaschii (strain ATCC 43067 / DSM 2661 / JAL-1 / JCM 10045 / NBRC 100440) (Methanococcus jannaschii).